Here is a 276-residue protein sequence, read N- to C-terminus: F-actin-capping protein subunit beta (276 aa).

This sequence belongs to the F-actin-capping protein beta subunit family. In terms of assembly, component of the F-actin capping complex, composed of a heterodimer of an alpha and a beta subunit. Subunit of dynactin, a multiprotein complex part of a tripartite complex with dynein and a adapter, such as BICDL1, BICD2 or HOOK3.

The protein resides in the cytoplasm. The protein localises to the cytoskeleton. Its function is as follows. F-actin-capping proteins bind in a Ca(2+)-independent manner to the fast growing ends of actin filaments (barbed end) thereby blocking the exchange of subunits at these ends. Unlike other capping proteins (such as gelsolin and severin), these proteins do not sever actin filaments. Forms, with CAPZB, the barbed end of the fast growing ends of actin filaments in the dynactin complex and stabilizes dynactin structure. The dynactin multiprotein complex activates the molecular motor dynein for ultra-processive transport along microtubules. The sequence is that of F-actin-capping protein subunit beta (cpb) from Drosophila melanogaster (Fruit fly).